The sequence spans 482 residues: tRNA sulfurtransferase (482 aa).

Residues 61-165 (LAIRDALTRI…DDRLLLIKGR (105 aa)) form the THUMP domain. ATP is bound by residues 183–184 (LI), Lys265, Gly287, and Gln296. Cys344 and Cys456 are oxidised to a cystine. One can recognise a Rhodanese domain in the interval 404 to 482 (FGPNDVILDI…GFNNVKVYRP (79 aa)). The active-site Cysteine persulfide intermediate is Cys456.

This sequence belongs to the ThiI family.

The protein resides in the cytoplasm. It catalyses the reaction [ThiI sulfur-carrier protein]-S-sulfanyl-L-cysteine + a uridine in tRNA + 2 reduced [2Fe-2S]-[ferredoxin] + ATP + H(+) = [ThiI sulfur-carrier protein]-L-cysteine + a 4-thiouridine in tRNA + 2 oxidized [2Fe-2S]-[ferredoxin] + AMP + diphosphate. It carries out the reaction [ThiS sulfur-carrier protein]-C-terminal Gly-Gly-AMP + S-sulfanyl-L-cysteinyl-[cysteine desulfurase] + AH2 = [ThiS sulfur-carrier protein]-C-terminal-Gly-aminoethanethioate + L-cysteinyl-[cysteine desulfurase] + A + AMP + 2 H(+). The protein operates within cofactor biosynthesis; thiamine diphosphate biosynthesis. In terms of biological role, catalyzes the ATP-dependent transfer of a sulfur to tRNA to produce 4-thiouridine in position 8 of tRNAs, which functions as a near-UV photosensor. Also catalyzes the transfer of sulfur to the sulfur carrier protein ThiS, forming ThiS-thiocarboxylate. This is a step in the synthesis of thiazole, in the thiamine biosynthesis pathway. The sulfur is donated as persulfide by IscS. This Escherichia coli O9:H4 (strain HS) protein is tRNA sulfurtransferase.